Consider the following 258-residue polypeptide: Small ribosomal subunit protein uS2 (258 aa).

It belongs to the universal ribosomal protein uS2 family.

The polypeptide is Small ribosomal subunit protein uS2 (Streptococcus suis (strain 98HAH33)).